A 535-amino-acid polypeptide reads, in one-letter code: Alpha-1,3-mannosyl-glycoprotein 4-beta-N-acetylglucosaminyltransferase A (535 aa).

The Cytoplasmic segment spans residues 1–4 (MRLR). The chain crosses the membrane as a helical; Signal-anchor for type II membrane protein span at residues 5–27 (NGTVATALAFITSFLTLSWYTTW). The stretch at 28 to 63 (QNGKEKLIAYQREFLALKERLRIAEHRISQRSSELN) forms a coiled coil. The Lumenal segment spans residues 28–535 (QNGKEKLIAY…NEIHIKKATN (508 aa)). N-linked (GlcNAc...) asparagine glycosylation is found at Asn-77 and Asn-458. Ser-474 bears the Phosphoserine mark.

This sequence belongs to the glycosyltransferase 54 family. It depends on a divalent metal cation as a cofactor. Post-translationally, N-glycosylated.

The protein resides in the golgi apparatus membrane. The protein localises to the secreted. It catalyses the reaction N(4)-{beta-D-GlcNAc-(1-&gt;2)-alpha-D-Man-(1-&gt;3)-[beta-D-GlcNAc-(1-&gt;2)-alpha-D-Man-(1-&gt;6)]-beta-D-Man-(1-&gt;4)-beta-D-GlcNAc-(1-&gt;4)-beta-D-GlcNAc}-L-asparaginyl-[protein] + UDP-N-acetyl-alpha-D-glucosamine = N(4)-{beta-D-GlcNAc-(1-&gt;2)-[beta-D-GlcNAc-(1-&gt;4)]-alpha-D-Man-(1-&gt;3)-[beta-D-GlcNAc-(1-&gt;2)-alpha-D-Man-(1-&gt;6)]-beta-D-Man-(1-&gt;4)-beta-D-GlcNAc-(1-&gt;4)-beta-D-GlcNAc}-L-asparaginyl-[protein] + UDP + H(+). The enzyme catalyses an N(4)-{beta-D-GlcNAc-(1-&gt;2)-alpha-D-Man-(1-&gt;3)-[alpha-D-Man-(1-&gt;6)]-beta-D-Man-(1-&gt;4)-beta-D-GlcNAc-(1-&gt;4)-beta-D-GlcNAc}-L-asparaginyl-[protein] + UDP-N-acetyl-alpha-D-glucosamine = an N(4)-{beta-D-GlcNAc-(1-&gt;2)-[beta-D-GlcNAc-(1-&gt;4)]-alpha-D-Man-(1-&gt;3)-[alpha-D-Man-(1-&gt;6)]-beta-D-Man-(1-&gt;4)-beta-D-GlcNAc-(1-&gt;4)-beta-D-GlcNAc}-L-asparaginyl-[protein] + UDP + H(+). It carries out the reaction an N(4)-{beta-D-GlcNAc-(1-&gt;2)-alpha-D-Man-(1-&gt;3)-[beta-D-GlcNAc-(1-&gt;2)-[beta-D-GlcNAc-(1-&gt;6)]-alpha-D-Man-(1-&gt;6)]-beta-D-Man-(1-&gt;4)-beta-D-GlcNAc-(1-&gt;4)-beta-D-GlcNAc}-L-asparaginyl-[protein] + UDP-N-acetyl-alpha-D-glucosamine = an N(4)-{beta-D-GlcNAc-(1-&gt;2)-[beta-D-GlcNAc-(1-&gt;4)]-alpha-D-Man-(1-&gt;3)-[beta-D-GlcNAc-(1-&gt;2)-[beta-D-GlcNAc-(1-&gt;6)]-alpha-D-Man-(1-&gt;6)]-beta-D-Man-(1-&gt;4)-beta-D-GlcNAc-(1-&gt;4)-beta-D-GlcNAc}-L-asparaginyl-[protein] + UDP + H(+). The catalysed reaction is an N(4)-{beta-D-GlcNAc-(1-&gt;2)-alpha-D-Man-(1-&gt;3)-[beta-D-GlcNAc-(1-&gt;2)-alpha-D-Man-(1-&gt;6)]-beta-D-Man-(1-&gt;4)-beta-D-GlcNAc-(1-&gt;4)-[alpha-L-Fuc-(1-&gt;6)]-beta-D-GlcNAc}-L-asparaginyl-[protein] + UDP-N-acetyl-alpha-D-glucosamine = N(4)-{beta-D-GlcNAc-(1-&gt;2)-[beta-D-GlcNAc-(1-&gt;4)]-alpha-D-Man-(1-&gt;3)-[beta-D-GlcNAc-(1-&gt;2)-alpha-D-Man-(1-&gt;6)]-beta-D-Man-(1-&gt;4)-beta-D-GlcNAc-(1-&gt;4)-[alpha-L-Fuc-(1-&gt;6)]-beta-D-GlcNAc}-asparaginyl-[protein] + UDP + H(+). It catalyses the reaction an N(4)-{beta-D-GlcNAc-(1-&gt;2)-alpha-D-Man-(1-&gt;3)-[beta-D-Gal-(1-&gt;4)-beta-D-GlcNAc-(1-&gt;2)-alpha-D-Man-(1-&gt;6)]-beta-D-Man-(1-&gt;4)-beta-D-GlcNAc-(1-&gt;4)-beta-D-GlcNAc}-L-asparaginyl-[protein] + UDP-N-acetyl-alpha-D-glucosamine = an N(4)-{beta-D-GlcNAc-(1-&gt;2)-[beta-D-GlcNAc-(1-&gt;4)]-alpha-D-Man-(1-&gt;3)-[beta-D-Gal-(1-&gt;4)-beta-D-GlcNAc-(1-&gt;2)-alpha-D-Man-(1-&gt;6)]-beta-D-Man-(1-&gt;4)-beta-D-GlcNAc-(1-&gt;4)-beta-D-GlcNAc}-L-asparaginyl-[protein] + UDP + H(+). The enzyme catalyses N(4)-{beta-D-GlcNAc-(1-&gt;2)-alpha-D-Man-(1-&gt;3)-[alpha-D-Man-(1-&gt;3)-{alpha-D-Man-(1-&gt;6)}-alpha-D-Man-(1-&gt;6)]-beta-D-Man-(1-&gt;4)-beta-D-GlcNAc-(1-&gt;4)-beta-D-GlcNAc}-asparaginyl-[protein] + UDP-N-acetyl-alpha-D-glucosamine = N(4)-{beta-D-GlcNAc-(1-&gt;2)-[beta-D-GlcNAc-(1-&gt;4)]-alpha-D-Man-(1-&gt;3)-[alpha-D-Man-(1-&gt;3)-{alpha-D-Man-(1-&gt;6)}-alpha-D-Man-(1-&gt;6)]-beta-D-Man-(1-&gt;4)-beta-D-GlcNAc-(1-&gt;4)-beta-D-GlcNAc}-asparaginyl-[protein] + UDP + H(+). It carries out the reaction N(4)-{beta-D-GlcNAc-(1-&gt;2)-alpha-D-Man-(1-&gt;3)-beta-D-Man-(1-&gt;4)-beta-D-GlcNAc-(1-&gt;4)-beta-D-GlcNAc}-asparaginyl-[protein] + UDP-N-acetyl-alpha-D-glucosamine = N(4)-{beta-D-GlcNAc-(1-&gt;2)-[beta-D-GlcNAc-(1-&gt;4)]-alpha-D-Man-(1-&gt;3)-beta-D-Man-(1-&gt;4)-beta-D-GlcNAc-(1-&gt;4)-beta-D-GlcNAc}-asparaginyl-[protein] + UDP + H(+). It functions in the pathway protein modification; protein glycosylation. With respect to regulation, inhibited by UDP. Functionally, glycosyltransferase that catalyze the transfer of GlcNAc from UDP-GlcNAc to the GlcNAcbeta1-2Manalpha1-3 arm of the core structure of N-linked glycans through a beta1-4 linkage and participates in the production of tri- and tetra-antennary N-linked sugar chains. Involved in glucose transport by mediating SLC2A2/GLUT2 glycosylation, thereby controlling cell-surface expression of SLC2A2 in pancreatic beta cells. This is Alpha-1,3-mannosyl-glycoprotein 4-beta-N-acetylglucosaminyltransferase A from Pongo abelii (Sumatran orangutan).